The primary structure comprises 159 residues: Transmembrane protein 89 (159 aa).

Positions Met1 to Ser24 are cleaved as a signal peptide. Topologically, residues Arg25–Ala63 are extracellular. Residues Ser64 to Leu86 traverse the membrane as a helical segment. The Cytoplasmic segment spans residues Gln87 to Gly159. Residues Arg91–Trp110 are disordered.

Its subcellular location is the membrane. The chain is Transmembrane protein 89 (TMEM89) from Homo sapiens (Human).